The chain runs to 314 residues: Dual specificity protein phosphatase 2 (314 aa).

Residues 23–144 (EAERTLLLDC…FQGCCPDLCS (122 aa)) enclose the Rhodanese domain. Residues 172-313 (GPVEILPYLF…LLQFETQVLC (142 aa)) enclose the Tyrosine-protein phosphatase domain. Cys-257 acts as the Phosphocysteine intermediate in catalysis.

Belongs to the protein-tyrosine phosphatase family. Non-receptor class dual specificity subfamily. In terms of assembly, interacts with MAPK14; this interaction does not lead to catalytic activation of DUSP2 and dephosphrylation of MAPK14. As to expression, expressed in hematopoietic tissues.

It is found in the nucleus. It catalyses the reaction O-phospho-L-tyrosyl-[protein] + H2O = L-tyrosyl-[protein] + phosphate. The catalysed reaction is O-phospho-L-threonyl-[protein] + H2O = L-threonyl-[protein] + phosphate. In terms of biological role, dephosphorylates both phosphorylated Thr and Tyr residues in MAPK1, and dephosphorylation of phosphotyrosine is slightly faster than that of phosphothreonine. Can dephosphorylate MAPK1. This chain is Dual specificity protein phosphatase 2, found in Homo sapiens (Human).